Consider the following 302-residue polypeptide: Deubiquitinase OTUD6B (302 aa).

Positions 1 to 10 are enriched in acidic residues; that stretch reads MEGSEDEEAE. 2 disordered regions span residues 1–52 and 99–121; these read MEGS…KQLA and EQQI…AALE. A compositionally biased stretch (basic residues) spans 106 to 116; sequence RISKAQKRREK. Residues 156–293 form the OTU domain; sequence LEIKQIPSDG…GEHYNSVKLL (138 aa). The tract at residues 161–167 is cys-loop; sequence IPSDGHC. Residue Asp-164 is part of the active site. Residue Cys-167 is the Nucleophile of the active site. Residues 228-238 form a variable-loop region; sequence IANTAAWGGQL. The tract at residues 276-286 is his-loop; sequence YMRHAYGLGEH. Residue His-286 is part of the active site.

It catalyses the reaction Thiol-dependent hydrolysis of ester, thioester, amide, peptide and isopeptide bonds formed by the C-terminal Gly of ubiquitin (a 76-residue protein attached to proteins as an intracellular targeting signal).. In terms of biological role, deubiquitinating enzyme that may play a role in the ubiquitin-dependent regulation of different cellular processes. This Gallus gallus (Chicken) protein is Deubiquitinase OTUD6B (OTUD6B).